We begin with the raw amino-acid sequence, 184 residues long: UPF0340 protein TTE0860 (184 aa).

It belongs to the UPF0340 family.

This Caldanaerobacter subterraneus subsp. tengcongensis (strain DSM 15242 / JCM 11007 / NBRC 100824 / MB4) (Thermoanaerobacter tengcongensis) protein is UPF0340 protein TTE0860.